Reading from the N-terminus, the 993-residue chain is Vinculin (993 aa).

2 tandem repeats follow at residues 258–364 (DSDN…TKEI) and 373–480 (TNTQ…ELVD). The 2 X repeats stretch occupies residues 258-480 (DSDNVTVMRK…LRNKLRELVD (223 aa)). The disordered stretch occupies residues 730 to 797 (ITGAGGSRPP…PPPETDDEEE (68 aa)). The segment covering 758-768 (VHDRIYIREDI) has biased composition (basic and acidic residues). Positions 769–790 (PTPPRPPPPVEISPPPRPPPPP) are enriched in pro residues.

The protein belongs to the vinculin/alpha-catenin family. As to quaternary structure, exhibits self-association properties.

The protein resides in the cytoplasm. Its subcellular location is the cytoskeleton. It is found in the cell junction. It localises to the adherens junction. The protein localises to the cell membrane. In terms of biological role, involved in cell adhesion. May be involved in the attachment of the actin-based microfilaments to the plasma membrane. The sequence is that of Vinculin from Brugia malayi (Filarial nematode worm).